A 600-amino-acid chain; its full sequence is Jacalin-related lectin 18 (600 aa).

Jacalin-type lectin domains follow at residues 12–158 (TQRL…YFTC), 161–303 (PTRM…YFTT), 304–447 (SPFI…YFRL), and 454–597 (GEKV…HVLP).

It belongs to the jacalin lectin family.

The chain is Jacalin-related lectin 18 (JAL18) from Arabidopsis thaliana (Mouse-ear cress).